A 342-amino-acid chain; its full sequence is MKQERTSKVKGLIKVIALVVPFLLNVNAFASPAESAGVTHDSIAAVARTEGAHAGEAPHGEAAGHGEEKAGDVIMHHILDSNVYSFEPFGEIVLPKIVVGGFDISITKHVVTLWVVSAIVLIVFTIIGSKYKTMSPKTAPKGFVNAMEALVEFIRLDVAKANIGPGYEKYLPYLLTVFMFVLLCNVLGLVPYGATATGNINVTLTLATFTFVLTQIAALKAHGIKGYLAHLTGGTHPALWIIMIPIEFIGLFTKPVALTIRLFANMTAGHIVILSLIFISFILKSYIVAVAMSVPFSIFIYLLEIFVAFLQAYIFTMLSALFIGLASAHEEHADHEAGAAHH.

8 helical membrane passes run 11–31 (GLIK…AFAS), 109–129 (HVVT…IIGS), 170–190 (YLPY…LGLV), 199–219 (NINV…IAAL), 238–258 (ALWI…PVAL), 262–282 (LFAN…ISFI), 287–307 (IVAV…EIFV), and 308–328 (AFLQ…LASA).

It belongs to the ATPase A chain family. In terms of assembly, F-type ATPases have 2 components, CF(1) - the catalytic core - and CF(0) - the membrane proton channel. CF(1) has five subunits: alpha(3), beta(3), gamma(1), delta(1), epsilon(1). CF(0) has four main subunits: a, b, b' and c.

It is found in the cell inner membrane. Key component of the proton channel; it plays a direct role in the translocation of protons across the membrane. The chain is ATP synthase subunit a from Chlorobium phaeobacteroides (strain DSM 266 / SMG 266 / 2430).